Here is a 128-residue protein sequence, read N- to C-terminus: Small ribosomal subunit protein uS9 (128 aa).

The protein belongs to the universal ribosomal protein uS9 family.

This Amoebophilus asiaticus (strain 5a2) protein is Small ribosomal subunit protein uS9.